The following is a 450-amino-acid chain: Probable rhamnogalacturonase E (450 aa).

A signal peptide spans 1–22; that stretch reads MTWSTSFLSVHFFAFITTSIHA. Cysteines 43 and 69 form a disulfide. 3 N-linked (GlcNAc...) asparagine glycosylation sites follow: N54, N92, and N131. The active-site Proton donor is the D222. The cysteines at positions 224 and 241 are disulfide-linked. N-linked (GlcNAc...) asparagine glycosylation is found at N242 and N257. H297 is a catalytic residue. N-linked (GlcNAc...) asparagine glycosylation is found at N324 and N329. Cystine bridges form between C347–C353 and C375–C384.

It belongs to the glycosyl hydrolase 28 family.

It is found in the secreted. Pectinolytic enzymes consist of four classes of enzymes: pectine lyase, polygalacturonase, pectin methylesterase and rhamnogalacturonase. Hydrolyzes alpha-D-galacturonopyranosyl-(1,2)-alpha-L-rhamnopyranosyl linkages in the backbone of the hairy regions of pectins. This chain is Probable rhamnogalacturonase E (rhgE), found in Aspergillus niger.